Here is a 355-residue protein sequence, read N- to C-terminus: Guanine nucleotide-binding protein G(i) subunit alpha-2 (355 aa).

A lipid anchor (N-myristoyl glycine) is attached at G2. Residue C3 is the site of S-palmitoyl cysteine attachment. In terms of domain architecture, G-alpha spans 32 to 355 (REVKLLLLGA…KNNLKDCGLF (324 aa)). The interval 35-48 (KLLLLGAGESGKST) is G1 motif. Residues 40–47 (GAGESGKS), 176–182 (LRTRVKT), 201–205 (DVGGQ), 270–273 (NKKD), and A327 each bind GTP. Mg(2+) is bound at residue S47. Residues 174-182 (DVLRTRVKT) form a G2 motif region. Position 179 is an ADP-ribosylarginine; by cholera toxin (R179). T182 is a Mg(2+) binding site. The segment at 197 to 206 (FKMFDVGGQR) is G3 motif. Position 205 is a deamidated glutamine; by Photorhabdus PAU_02230 (Q205). Positions 266–273 (ILFLNKKD) are G4 motif. Residues 325–330 (TCATDT) form a G5 motif region. The residue at position 352 (C352) is an ADP-ribosylcysteine; by pertussis toxin.

The protein belongs to the G-alpha family. G(i/o/t/z) subfamily. As to quaternary structure, g proteins are composed of 3 units; alpha, beta and gamma. The alpha chain contains the guanine nucleotide binding site. In this context, interacts with GNB2. Interacts with GPSM1. Interacts with RGS12 and RGS14. Interacts with UNC5B. Interacts (inactive GDP-bound form) with NUCB1 (via GBA motif); the interaction leads to activation of GNAI3. Interacts (inactive GDP-bound form) with CCDC88C/DAPLE (via GBA motif). Interacts (inactive GDP-bound form) with CCDC8A/GIV (via GBA motif). Interacts with CXCR1 and CXCR2. In terms of processing, (Microbial infection) Deamidated at Gln-205 by Photorhabdus asymbiotica toxin PAU_02230, blocking GTP hydrolysis of heterotrimeric GNAQ or GNA11 and G-alphai (GNAI1, GNAI2 or GNAI3) proteins, thereby activating RhoA.

The protein resides in the cytoplasm. The protein localises to the cytoskeleton. It is found in the microtubule organizing center. Its subcellular location is the centrosome. It localises to the cell membrane. The protein resides in the membrane. Functionally, guanine nucleotide-binding proteins (G proteins) are involved as modulators or transducers in various transmembrane signaling systems. The G(i) proteins are involved in hormonal regulation of adenylate cyclase: they inhibit the cyclase in response to beta-adrenergic stimuli. May play a role in cell division. Its function is as follows. Regulates the cell surface density of dopamine receptors DRD2 by sequestrating them as an intracellular pool. This chain is Guanine nucleotide-binding protein G(i) subunit alpha-2 (GNAI2), found in Homo sapiens (Human).